Here is a 318-residue protein sequence, read N- to C-terminus: Transaldolase (318 aa).

Lysine 131 functions as the Schiff-base intermediate with substrate in the catalytic mechanism.

The protein belongs to the transaldolase family. Type 1 subfamily. In terms of assembly, homodimer.

It is found in the cytoplasm. The enzyme catalyses D-sedoheptulose 7-phosphate + D-glyceraldehyde 3-phosphate = D-erythrose 4-phosphate + beta-D-fructose 6-phosphate. It participates in carbohydrate degradation; pentose phosphate pathway; D-glyceraldehyde 3-phosphate and beta-D-fructose 6-phosphate from D-ribose 5-phosphate and D-xylulose 5-phosphate (non-oxidative stage): step 2/3. In terms of biological role, transaldolase is important for the balance of metabolites in the pentose-phosphate pathway. The sequence is that of Transaldolase from Cellvibrio japonicus (strain Ueda107) (Pseudomonas fluorescens subsp. cellulosa).